A 154-amino-acid polypeptide reads, in one-letter code: Endoribonuclease YbeY (154 aa).

Positions 117, 121, and 127 each coordinate Zn(2+).

This sequence belongs to the endoribonuclease YbeY family. Zn(2+) serves as cofactor.

It localises to the cytoplasm. Single strand-specific metallo-endoribonuclease involved in late-stage 70S ribosome quality control and in maturation of the 3' terminus of the 16S rRNA. The protein is Endoribonuclease YbeY of Polaromonas sp. (strain JS666 / ATCC BAA-500).